Consider the following 529-residue polypeptide: T-complex protein 1 subunit delta (529 aa).

The protein belongs to the TCP-1 chaperonin family. In terms of assembly, heterooligomeric complex of about 850 to 900 kDa that forms two stacked rings, 12 to 16 nm in diameter.

It localises to the cytoplasm. In terms of biological role, molecular chaperone; assists the folding of proteins upon ATP hydrolysis. Known to play a role, in vitro, in the folding of actin and tubulin. This Eremothecium gossypii (strain ATCC 10895 / CBS 109.51 / FGSC 9923 / NRRL Y-1056) (Yeast) protein is T-complex protein 1 subunit delta (CCT4).